The sequence spans 976 residues: MLRKFILGLLLASQAVAQLPHKERDYDSRVYVALSLRDGLDPREFEASVSGLDHGQWTFEHPVGTIPNTYVFSAPKEYAPIENIRDQDRLEVAGGVLAKRELRKREKLQKKYGMSEEDVEKRLVALERLDYDWSERGLGSLEVLSERRIHKRAPVNWTEEEMEYLKEIKRRAEEAQKAQDDKGDKKEDQKDDKKEGQEAQKEGDKEDNKGDDKEDGEEDDDDDEDEDDDDASPAMPVQWKPVDESMYGGMPDDSLYDVYRKYYPDEVGIKDPSLWKQWYLHNVHKAGHDLNVTGLWLRNVTGWGVVTAVVDDGLDMNAEDIKANYFAEGSWDFNFNKSDPKPSSHDDYHGTRCAGEIAAVRNNVCGVGVAYDSKVAGIRILSKEIAEDIEALAINYEMDKNDIYSCSWGPPDNGQTMARPGKVVKDAMVNAITNGRQGKGNVFVFASGNGGSRGDNCNFDGYTNSIYSITVGALDFNDGHPYYSEACSANMVVTYSSGSEHYIVGTDINAIDDKSAAPRCQNQHGGTSAAAPLAAGVFALALSVRPDLTWRDMQYLALYSAVEINSNDDGWQDTASGQRFHHQFGYGKLDASKIVELAEGWNLVNNQTSFHSEVKTVSQKVKYNEPLKSVITVTRDDLDKVNFKRAEHITAVLNLEASYRGHVRVLLKGPRGVVSELAALRRDDRSKDGYDNWAFMSVAHWADEGEGDWELTVENTGEQDQVELVNWQLNVFGEQKDKREENKEGESKPEDENKEGEKEGEKKPEDENKEEGNKEDDKGDQKEDKPEDKPEDKPEDTPEDKPEDKPEDAPEDKPSDEKKPEEKPEEKPVDNSDSSSDSSDSHTSWWPDLSSKKSAWLYGAVLLVGGFIAVIGIYACVTRRNRVRRNRSKDAPSASSFEFDLIPHDDSDDDFVYPEDTHRRSGDNDRLYDPFAEVEDDDDMFRISDEGEDAHDVEPELNRVSMEADKRDNDRQNLLG.

An N-terminal signal peptide occupies residues 1-17; the sequence is MLRKFILGLLLASQAVA. A glycan (N-linked (GlcNAc...) asparagine) is linked at Asn-156. The span at 172–212 shows a compositional bias: basic and acidic residues; the sequence is AEEAQKAQDDKGDKKEDQKDDKKEGQEAQKEGDKEDNKGDD. The disordered stretch occupies residues 172 to 246; that stretch reads AEEAQKAQDD…VQWKPVDESM (75 aa). Residues 213–231 are compositionally biased toward acidic residues; the sequence is KEDGEEDDDDDEDEDDDDA. A Peptidase S8 domain is found at 277–595; sequence QWYLHNVHKA…YGKLDASKIV (319 aa). Residues Asn-291 and Asn-299 are each glycosylated (N-linked (GlcNAc...) asparagine). Catalysis depends on Asp-311, which acts as the Charge relay system. N-linked (GlcNAc...) asparagine glycosylation occurs at Asn-336. Catalysis depends on charge relay system residues His-349 and Ser-528. The chain crosses the membrane as a helical span at residues 524–544; it reads HGGTSAAAPLAAGVFALALSV. One can recognise a P/Homo B domain in the interval 604–737; sequence VNNQTSFHSE…QLNVFGEQKD (134 aa). A glycan (N-linked (GlcNAc...) asparagine) is linked at Asn-606. A disordered region spans residues 733-848; that stretch reads GEQKDKREEN…SDSHTSWWPD (116 aa). Over residues 734–830 the composition is skewed to basic and acidic residues; it reads EQKDKREENK…EEKPEEKPVD (97 aa). A helical transmembrane segment spans residues 855–875; the sequence is AWLYGAVLLVGGFIAVIGIYA. Asn-886 is a glycosylation site (N-linked (GlcNAc...) asparagine). The interval 914–976 is disordered; sequence PEDTHRRSGD…RDNDRQNLLG (63 aa). Composition is skewed to basic and acidic residues over residues 915–928 and 940–976; these read EDTHRRSGDNDRLY and MFRISDEGEDAHDVEPELNRVSMEADKRDNDRQNLLG.

This sequence belongs to the peptidase S8 family. Furin subfamily.

It is found in the membrane. In Yarrowia lipolytica (strain CLIB 122 / E 150) (Yeast), this protein is Dibasic-processing endoprotease (XPR6).